The chain runs to 154 residues: 6,7-dimethyl-8-ribityllumazine synthase (154 aa).

5-amino-6-(D-ribitylamino)uracil contacts are provided by residues W22, 56–58 (AWE), and 80–82 (CVV). A (2S)-2-hydroxy-3-oxobutyl phosphate-binding site is contributed by 85-86 (DT). H88 (proton donor) is an active-site residue. N113 contacts 5-amino-6-(D-ribitylamino)uracil. R127 is a binding site for (2S)-2-hydroxy-3-oxobutyl phosphate.

The protein belongs to the DMRL synthase family. As to quaternary structure, forms an icosahedral capsid composed of 60 subunits, arranged as a dodecamer of pentamers.

The catalysed reaction is (2S)-2-hydroxy-3-oxobutyl phosphate + 5-amino-6-(D-ribitylamino)uracil = 6,7-dimethyl-8-(1-D-ribityl)lumazine + phosphate + 2 H2O + H(+). It participates in cofactor biosynthesis; riboflavin biosynthesis; riboflavin from 2-hydroxy-3-oxobutyl phosphate and 5-amino-6-(D-ribitylamino)uracil: step 1/2. Functionally, catalyzes the formation of 6,7-dimethyl-8-ribityllumazine by condensation of 5-amino-6-(D-ribitylamino)uracil with 3,4-dihydroxy-2-butanone 4-phosphate. This is the penultimate step in the biosynthesis of riboflavin. In Xylella fastidiosa (strain 9a5c), this protein is 6,7-dimethyl-8-ribityllumazine synthase.